Here is a 297-residue protein sequence, read N- to C-terminus: 4-hydroxy-tetrahydrodipicolinate synthase (297 aa).

Residue Thr-45 coordinates pyruvate. Tyr-133 functions as the Proton donor/acceptor in the catalytic mechanism. Residue Lys-161 is the Schiff-base intermediate with substrate of the active site. Ile-205 contributes to the pyruvate binding site.

The protein belongs to the DapA family. In terms of assembly, homotetramer; dimer of dimers.

The protein resides in the cytoplasm. It carries out the reaction L-aspartate 4-semialdehyde + pyruvate = (2S,4S)-4-hydroxy-2,3,4,5-tetrahydrodipicolinate + H2O + H(+). It participates in amino-acid biosynthesis; L-lysine biosynthesis via DAP pathway; (S)-tetrahydrodipicolinate from L-aspartate: step 3/4. In terms of biological role, catalyzes the condensation of (S)-aspartate-beta-semialdehyde [(S)-ASA] and pyruvate to 4-hydroxy-tetrahydrodipicolinate (HTPA). This Dichelobacter nodosus (strain VCS1703A) protein is 4-hydroxy-tetrahydrodipicolinate synthase.